The chain runs to 328 residues: Gonadotropin-releasing hormone receptor (328 aa).

Residues 1–38 are Extracellular-facing; it reads MANRAYLEQKQTQCSIINSSFSMTHRDLPTLTLSGKIR. Asparagine 18 carries N-linked (GlcNAc...) asparagine glycosylation. Residues 39-58 form a helical membrane-spanning segment; the sequence is VMVTFFLFLVSTAFNASFLM. Topologically, residues 59–77 are cytoplasmic; the sequence is KLQRQTQKKEEVKKLTRMK. Residues 78–97 form a helical membrane-spanning segment; sequence VLLKHLTLANLLETVIVMPL. Residues 98 to 115 lie on the Extracellular side of the membrane; sequence DGIWNVTVQWYAGEFLCK. Asparagine 102 is a glycosylation site (N-linked (GlcNAc...) asparagine). An intrachain disulfide couples cysteine 114 to cysteine 196. The chain crosses the membrane as a helical span at residues 116–137; that stretch reads ALSYLKLFSMYAPAFMMVVISL. Residues 138 to 164 are Cytoplasmic-facing; the sequence is DRFLAITRPLAVKSNTKVGQSLIAVAW. A helical membrane pass occupies residues 165-184; the sequence is FLSIVLAGPQLYIFRMIYVE. Over 185-212 the chain is Extracellular; it reads DISGQTGNFSQCVTHCSFPEWWQEAFYN. N-linked (GlcNAc...) asparagine glycosylation is present at asparagine 192. Residues 213 to 232 traverse the membrane as a helical segment; sequence LLTFSCLFIGPLLIMLVCNA. The Cytoplasmic segment spans residues 233-281; that stretch reads KIIFTLTQVLHQDPHELQLNRSKNNIPRARLRTLKMTVAFATLFTICWT. Residues 282-300 form a helical membrane-spanning segment; it reads PYYVLGIWYWFDPEMLNRV. At 301–306 the chain is on the extracellular side; the sequence is SDPVNH. Residues 307–326 traverse the membrane as a helical segment; it reads FFFLFGLLNPCFDPLIYGYF. Over 327–328 the chain is Cytoplasmic; sequence SL.

This sequence belongs to the G-protein coupled receptor 1 family.

Its subcellular location is the cell membrane. Receptor for gonadotropin releasing hormone (GnRH) that mediates the action of GnRH to stimulate the secretion of the gonadotropic hormones luteinizing hormone (LH) and follicle-stimulating hormone (FSH). This receptor mediates its action by association with G-proteins that activate a phosphatidylinositol-calcium second messenger system. This is Gonadotropin-releasing hormone receptor (GNRHR) from Trichosurus vulpecula (Brush-tailed possum).